The chain runs to 812 residues: Lon protease (812 aa).

A Lon N-terminal domain is found at 11-204 (IPVLPLRDVV…YLMAMMESEI (194 aa)). Residue 356–363 (GPPGVGKT) coordinates ATP. In terms of domain architecture, Lon proteolytic spans 592–773 (ENRVGQVTGL…EEEQTLSLQN (182 aa)). Catalysis depends on residues serine 679 and lysine 722. Residues 745 to 764 (KENPDNAKADQDRHPVKNNE) are compositionally biased toward basic and acidic residues. The disordered stretch occupies residues 745-766 (KENPDNAKADQDRHPVKNNEEE).

This sequence belongs to the peptidase S16 family. As to quaternary structure, homohexamer. Organized in a ring with a central cavity. ATP binding and hydrolysis do not affect the oligomeric state of the enzyme.

The protein resides in the cytoplasm. It carries out the reaction Hydrolysis of proteins in presence of ATP.. Its activity is regulated as follows. Contains an allosteric site (distinct from its active site), whose occupancy by an unfolded polypeptide leads to enzyme activation. Its function is as follows. ATP-dependent serine protease that mediates the selective degradation of mutant and abnormal proteins as well as certain short-lived regulatory proteins. Required for cellular homeostasis and for survival from DNA damage and developmental changes induced by stress. Degrades polypeptides processively to yield small peptide fragments that are 5 to 10 amino acids long. Binds to DNA in a double-stranded, site-specific manner. Endogenous substrates include the regulatory proteins RcsA and SulA, the transcriptional activator SoxS, and UmuD. Its overproduction specifically inhibits translation through at least two different pathways, one of them being the YoeB-YefM toxin-antitoxin system. The protein is Lon protease of Shigella dysenteriae serotype 1 (strain Sd197).